Reading from the N-terminus, the 310-residue chain is Glutamyl-Q tRNA(Asp) synthetase (310 aa).

Residues 8 to 12 (RFAPS) and E44 contribute to the L-glutamate site. The short motif at 11-21 (PSPTGPLHLGS) is the 'HIGH' region element. Zn(2+) contacts are provided by C100, C102, Y123, and C127. L-glutamate-binding residues include Y183 and R201. Residues 239 to 243 (KLSKQ) carry the 'KMSKS' region motif. K242 provides a ligand contact to ATP.

Belongs to the class-I aminoacyl-tRNA synthetase family. GluQ subfamily. Zn(2+) serves as cofactor.

Catalyzes the tRNA-independent activation of glutamate in presence of ATP and the subsequent transfer of glutamate onto a tRNA(Asp). Glutamate is transferred on the 2-amino-5-(4,5-dihydroxy-2-cyclopenten-1-yl) moiety of the queuosine in the wobble position of the QUC anticodon. This is Glutamyl-Q tRNA(Asp) synthetase from Cupriavidus metallidurans (strain ATCC 43123 / DSM 2839 / NBRC 102507 / CH34) (Ralstonia metallidurans).